Here is a 904-residue protein sequence, read N- to C-terminus: Translation initiation factor IF-2 (904 aa).

Residues glutamine 239–proline 316 are disordered. Basic and acidic residues predominate over residues glutamate 248 to lysine 278. A tr-type G domain is found at histidine 404–glutamate 571. The interval glycine 413–threonine 420 is G1. Residue glycine 413–threonine 420 participates in GTP binding. The segment at glycine 438 to histidine 442 is G2. Residues aspartate 459–glycine 462 form a G3 region. Residues aspartate 459–histidine 463 and asparagine 513–aspartate 516 contribute to the GTP site. The G4 stretch occupies residues asparagine 513–aspartate 516. Residues serine 549–lysine 551 are G5.

The protein belongs to the TRAFAC class translation factor GTPase superfamily. Classic translation factor GTPase family. IF-2 subfamily.

It is found in the cytoplasm. One of the essential components for the initiation of protein synthesis. Protects formylmethionyl-tRNA from spontaneous hydrolysis and promotes its binding to the 30S ribosomal subunits. Also involved in the hydrolysis of GTP during the formation of the 70S ribosomal complex. The sequence is that of Translation initiation factor IF-2 from Dechloromonas aromatica (strain RCB).